A 105-amino-acid polypeptide reads, in one-letter code: Phosphoribosyl-ATP pyrophosphatase (105 aa).

It belongs to the PRA-PH family.

The protein localises to the cytoplasm. The enzyme catalyses 1-(5-phospho-beta-D-ribosyl)-ATP + H2O = 1-(5-phospho-beta-D-ribosyl)-5'-AMP + diphosphate + H(+). The protein operates within amino-acid biosynthesis; L-histidine biosynthesis; L-histidine from 5-phospho-alpha-D-ribose 1-diphosphate: step 2/9. In Roseobacter denitrificans (strain ATCC 33942 / OCh 114) (Erythrobacter sp. (strain OCh 114)), this protein is Phosphoribosyl-ATP pyrophosphatase.